The following is a 240-amino-acid chain: Triosephosphate isomerase (240 aa).

6 to 8 contributes to the substrate binding site; the sequence is NLK. His-88 serves as the catalytic Electrophile. Glu-157 acts as the Proton acceptor in catalysis. Substrate is bound by residues Gly-163 and Ser-193.

The protein belongs to the triosephosphate isomerase family. In terms of assembly, homodimer.

The protein resides in the cytoplasm. The catalysed reaction is D-glyceraldehyde 3-phosphate = dihydroxyacetone phosphate. It functions in the pathway carbohydrate biosynthesis; gluconeogenesis. It participates in carbohydrate degradation; glycolysis; D-glyceraldehyde 3-phosphate from glycerone phosphate: step 1/1. In terms of biological role, involved in the gluconeogenesis. Catalyzes stereospecifically the conversion of dihydroxyacetone phosphate (DHAP) to D-glyceraldehyde-3-phosphate (G3P). This chain is Triosephosphate isomerase, found in Sulfurimonas denitrificans (strain ATCC 33889 / DSM 1251) (Thiomicrospira denitrificans (strain ATCC 33889 / DSM 1251)).